Reading from the N-terminus, the 108-residue chain is U-scoloptoxin(10)-Sm1a (108 aa).

A signal peptide spans 1-24 (MNKQWLHFFSVLLLCYVIEETCSL).

It belongs to the scoloptoxin-10 family. Contains 3 disulfide bonds. In terms of tissue distribution, expressed by the venom gland.

Its subcellular location is the secreted. The polypeptide is U-scoloptoxin(10)-Sm1a (Scolopendra morsitans (Tanzanian blue ringleg centipede)).